The following is a 932-amino-acid chain: MTEFLPFVARHIGPRHEDERAMLAALGLPSMETLITQAVPASIRLNRALNLPAALSEADALAELGTIMGRNVVKKSFIGAGYHGVHTPPVIQRNLFENPAWYTAYTPYQSEISQGRLELLFHFQTLVAELTGLPVACASLLDEATAVAEAIGVACRHHRDKRSRILLAGELHPQTVDVVNTRAEPLGWEIATGSDVDDNTAAIVVPWPDTRGVYGDFAKVIADAKAKGALVIAVADPLALTIMEAPARWGADMAVGSMQRYGVPMGFGGPHAAYLAVSEALTRIIPGRIVGQSVDAHGRAAYRLALQTREQHIRRDKATSNICTAQALLANMAAAFAIWHGPAGLQAIATRVAALAARFAAALKAAGVEIAGESLFDTVTAKVPGKAAAIAAEADKGGRLIRIIDADTVGVTFDETSTEEDLTALASLFGAKLVGGDTVLVPGKERGEGFLTQEVFHSHRSETEMMRFLRRLADKDLALDRAMIPLGSCTMKLNAAAEMMPVSWNTVANLHPFAPAEQVQGYAKMTSDLEAWLCEITGFAGVSLQPNAGSQGEYAGLMAIRHYHQARGQGHRNICLIPSSAHGTNPASASMAGMSVVVVNCRPDGDIDIDDLKAKAEKHRDNLAAFMITYPSTYGVFEEGIKAFCEIVHDNGGQVYFDGANLNALVGLARPADIGADVCHMNLHKTFCIPHGGGGPGVGPIGVAKHLVPYLPGHVEAGSEHAVAAAQFGSASILVITWMYIRMMGGAGLKKATEAAILNANYIAHRLKGVYPILYTGAHDRVAHECIVDTRVLKDSAGITVEDVAKRLIDYGFHAPTMSWPVAGTLMIEPTESEPKLEIDRLCDAMIAIAGEAKKVADGVWPADDNPLANAPHTASDTLATEWKHPYTREEAVFPGGAFDPTAKYWPPVSRVDNVGGDRNLICSCPPVAAYG.

The residue at position 685 (lysine 685) is an N6-(pyridoxal phosphate)lysine.

This sequence belongs to the GcvP family. As to quaternary structure, the glycine cleavage system is composed of four proteins: P, T, L and H. It depends on pyridoxal 5'-phosphate as a cofactor.

It catalyses the reaction N(6)-[(R)-lipoyl]-L-lysyl-[glycine-cleavage complex H protein] + glycine + H(+) = N(6)-[(R)-S(8)-aminomethyldihydrolipoyl]-L-lysyl-[glycine-cleavage complex H protein] + CO2. Functionally, the glycine cleavage system catalyzes the degradation of glycine. The P protein binds the alpha-amino group of glycine through its pyridoxal phosphate cofactor; CO(2) is released and the remaining methylamine moiety is then transferred to the lipoamide cofactor of the H protein. The protein is Glycine dehydrogenase (decarboxylating) of Brucella melitensis biotype 1 (strain ATCC 23456 / CCUG 17765 / NCTC 10094 / 16M).